Consider the following 807-residue polypeptide: Glycerol-3-phosphate acyltransferase (807 aa).

Residues 305–310 (CHRSHM) carry the HXXXXD motif motif.

Belongs to the GPAT/DAPAT family.

It is found in the cell inner membrane. The enzyme catalyses sn-glycerol 3-phosphate + an acyl-CoA = a 1-acyl-sn-glycero-3-phosphate + CoA. Its pathway is phospholipid metabolism; CDP-diacylglycerol biosynthesis; CDP-diacylglycerol from sn-glycerol 3-phosphate: step 1/3. The sequence is that of Glycerol-3-phosphate acyltransferase from Shigella boydii serotype 18 (strain CDC 3083-94 / BS512).